The sequence spans 389 residues: Alanine racemase 1 (389 aa).

Lys-41 serves as the catalytic Proton acceptor; specific for D-alanine. At Lys-41 the chain carries N6-(pyridoxal phosphate)lysine. A substrate-binding site is contributed by Arg-137. Tyr-266 serves as the catalytic Proton acceptor; specific for L-alanine. Met-313 contributes to the substrate binding site.

The protein belongs to the alanine racemase family. The cofactor is pyridoxal 5'-phosphate.

It catalyses the reaction L-alanine = D-alanine. Its pathway is amino-acid biosynthesis; D-alanine biosynthesis; D-alanine from L-alanine: step 1/1. In terms of biological role, catalyzes the interconversion of L-alanine and D-alanine. May also act on other amino acids. The chain is Alanine racemase 1 (alr1) from Bacillus subtilis (strain 168).